The primary structure comprises 283 residues: 2-dehydro-3-deoxyphosphooctonate aldolase (283 aa).

Belongs to the KdsA family.

It is found in the cytoplasm. It carries out the reaction D-arabinose 5-phosphate + phosphoenolpyruvate + H2O = 3-deoxy-alpha-D-manno-2-octulosonate-8-phosphate + phosphate. Its pathway is carbohydrate biosynthesis; 3-deoxy-D-manno-octulosonate biosynthesis; 3-deoxy-D-manno-octulosonate from D-ribulose 5-phosphate: step 2/3. It functions in the pathway bacterial outer membrane biogenesis; lipopolysaccharide biosynthesis. This Shewanella frigidimarina (strain NCIMB 400) protein is 2-dehydro-3-deoxyphosphooctonate aldolase.